We begin with the raw amino-acid sequence, 246 residues long: Acetoacetate decarboxylase (246 aa).

Residue Lys-116 is the Schiff-base intermediate with acetoacetate of the active site.

This sequence belongs to the ADC family. As to quaternary structure, homododecamer.

It catalyses the reaction acetoacetate + H(+) = acetone + CO2. Catalyzes the conversion of acetoacetate to acetone and carbon dioxide. The polypeptide is Acetoacetate decarboxylase (Chromobacterium violaceum (strain ATCC 12472 / DSM 30191 / JCM 1249 / CCUG 213 / NBRC 12614 / NCIMB 9131 / NCTC 9757 / MK)).